Reading from the N-terminus, the 98-residue chain is NADH-ubiquinone oxidoreductase chain 4L (98 aa).

3 helical membrane-spanning segments follow: residues 1-21, 25-45, and 59-81; these read MSLVHINIFLAFTVSLVGLLM, HLMSSLLCLEGMMLSLFVMAT, and MPIILLVFAACERALGLSLLVMV.

This sequence belongs to the complex I subunit 4L family. In terms of assembly, core subunit of respiratory chain NADH dehydrogenase (Complex I) which is composed of 45 different subunits.

It is found in the mitochondrion inner membrane. The enzyme catalyses a ubiquinone + NADH + 5 H(+)(in) = a ubiquinol + NAD(+) + 4 H(+)(out). Its function is as follows. Core subunit of the mitochondrial membrane respiratory chain NADH dehydrogenase (Complex I) which catalyzes electron transfer from NADH through the respiratory chain, using ubiquinone as an electron acceptor. Part of the enzyme membrane arm which is embedded in the lipid bilayer and involved in proton translocation. The chain is NADH-ubiquinone oxidoreductase chain 4L (MT-ND4L) from Equus caballus (Horse).